Consider the following 344-residue polypeptide: Aspartate-semialdehyde dehydrogenase (344 aa).

Residues 10–13 and 38–39 each bind NADP(+); these read TGQV and RS. Residue Arg101 coordinates phosphate. Cys131 acts as the Acyl-thioester intermediate in catalysis. Substrate is bound at residue Gln158. 161-162 is a binding site for NADP(+); the sequence is SG. Lys228 contributes to the phosphate binding site. Arg250 contributes to the substrate binding site. His257 acts as the Proton acceptor in catalysis. Asn326 serves as a coordination point for NADP(+).

This sequence belongs to the aspartate-semialdehyde dehydrogenase family. Homodimer.

The enzyme catalyses L-aspartate 4-semialdehyde + phosphate + NADP(+) = 4-phospho-L-aspartate + NADPH + H(+). The protein operates within amino-acid biosynthesis; L-lysine biosynthesis via DAP pathway; (S)-tetrahydrodipicolinate from L-aspartate: step 2/4. It functions in the pathway amino-acid biosynthesis; L-methionine biosynthesis via de novo pathway; L-homoserine from L-aspartate: step 2/3. Its pathway is amino-acid biosynthesis; L-threonine biosynthesis; L-threonine from L-aspartate: step 2/5. Functionally, catalyzes the NADPH-dependent formation of L-aspartate-semialdehyde (L-ASA) by the reductive dephosphorylation of L-aspartyl-4-phosphate. The protein is Aspartate-semialdehyde dehydrogenase of Corynebacterium melassecola.